A 155-amino-acid polypeptide reads, in one-letter code: Deoxyuridine 5'-triphosphate nucleotidohydrolase (155 aa).

Substrate-binding positions include 72-74 (RSG), N85, 89-91 (TVD), and K99.

Belongs to the dUTPase family. Mg(2+) is required as a cofactor.

The catalysed reaction is dUTP + H2O = dUMP + diphosphate + H(+). Its pathway is pyrimidine metabolism; dUMP biosynthesis; dUMP from dCTP (dUTP route): step 2/2. This enzyme is involved in nucleotide metabolism: it produces dUMP, the immediate precursor of thymidine nucleotides and it decreases the intracellular concentration of dUTP so that uracil cannot be incorporated into DNA. This chain is Deoxyuridine 5'-triphosphate nucleotidohydrolase, found in Parvibaculum lavamentivorans (strain DS-1 / DSM 13023 / NCIMB 13966).